The primary structure comprises 384 residues: Guanine nucleotide-binding protein alpha-1 subunit (384 aa).

Residues 1–22 (MGSLCSRNKHYSQADDEENTQT) are disordered. Gly2 carries N-myristoyl glycine lipidation. A lipid anchor (S-palmitoyl cysteine) is attached at Cys5. The region spanning 38 to 384 (HIQKLLLLGA…RRNLFEAGLL (347 aa)) is the G-alpha domain. The tract at residues 41–54 (KLLLLGAGDSGKST) is G1 motif. Asp49, Ser50, Gly51, Lys52, Ser53, Thr54, Asp163, Leu188, Thr194, Gly222, Asn288, Lys289, Asp291, and Ala356 together coordinate GTP. Ser53 provides a ligand contact to Mg(2+). Residues 186 to 194 (DVLFARIRT) are G2 motif. A Mg(2+)-binding site is contributed by Thr194. Residues 215–224 (YRLFDVGGQR) form a G3 motif region. The G4 motif stretch occupies residues 284–291 (MLFLNKFD). Residues 354 to 359 (TTALDQ) are G5 motif.

It belongs to the G-alpha family. As to quaternary structure, g proteins are composed of 3 units; alpha, beta and gamma. The alpha chain contains the guanine nucleotide binding site. Mg(2+) serves as cofactor.

Its function is as follows. Guanine nucleotide-binding proteins (G proteins) are involved as modulators or transducers in various transmembrane signaling systems. This is Guanine nucleotide-binding protein alpha-1 subunit (GPA1) from Solanum lycopersicum (Tomato).